The primary structure comprises 862 residues: MMNAHFAGVGDNADNAAYEHGIQVIDEDKMFNGNVSTYLNIEKVIPAGFNYHLISVFGSQSTGKSTLLNHLFGTQFGVMSEQERRQTTKGIWMSKNKRESGGSSMAENILVMDVEGTDGRERGEDQDFERKSALFALATSEVLIVNIWEHQVGLYQGANMGLLKTVFEVNLQLFVKDSQSTPRSLLFFVIRDHLGTTPLKNLQNTLVQDLSKLWSTISKPAGLENSRIEDYFDFAFVALPHKILQPEKFDEAVTQLSTRFKEGYNDPRKSGLIDEATAPIFLPQYHRRIPADGFSAYAEGVWDQIVNNKDLDLPTQQELLAQFRCDEISREVQVAFDETITPLEDKQAEDARAGTHSLIPDLGPKMNAARQKVLKDFDVNASRYHKGVYKRKQAELEGKVDTRLKALFQKQLTAAHKSGIEGFTEAVSAAVKNGQKKNASYDFAQIVDSEKKKALTKFEEDATAMAIEGAAWSSHENELKIYKKELDDVSGRLRKEEMRRLATRIERWVRTRLDESIGLEFNKLGSGRGGSGAPEHGDRPPTEKDLWDRVWTIFTDTVKMAEKRFTDRASSFDASADEVEVGLWRLRRKSWGVLRAKIDEEVMEGNILLKLRENFEDKFRYDDLGVPRIWRPTDDIDGLYTKARESTITVIPLLAHFKLAKTSKPPPLDAWIGEAPASVSPADEEDLSPIGGVDDDEDKTLEDEMTILSDGKQADLLVRFKKTADGVYVEAKRGAIGGLSQIPFWLYPAMLALGWNEIVAVLRNPIYFIFLILLAVAAYVTYTLNLWGPIMRVANAASQQGLEVGKERLRAFLENSDAGRQAMAMSGSGDSNSTRRYEDVKMDRLNGDGKKSKSMEEDLDDI.

Over 1–741 (MMNAHFAGVG…KRGAIGGLSQ (741 aa)) the chain is Cytoplasmic. The GB1/RHD3-type G domain maps to 48–298 (GFNYHLISVF…IPADGFSAYA (251 aa)). 58–65 (GSQSTGKS) is a GTP binding site. Residues 473–499 (SSHENELKIYKKELDDVSGRLRKEEMR) are a coiled coil. The segment at 524 to 543 (LGSGRGGSGAPEHGDRPPTE) is disordered. The helical transmembrane segment at 742-762 (IPFWLYPAMLALGWNEIVAVL) threads the bilayer. Topologically, residues 763–765 (RNP) are lumenal. The helical transmembrane segment at 766–786 (IYFIFLILLAVAAYVTYTLNL) threads the bilayer. At 787–862 (WGPIMRVANA…KSMEEDLDDI (76 aa)) the chain is on the cytoplasmic side. Positions 821–862 (QAMAMSGSGDSNSTRRYEDVKMDRLNGDGKKSKSMEEDLDDI) are disordered. The segment covering 833–856 (STRRYEDVKMDRLNGDGKKSKSME) has biased composition (basic and acidic residues).

This sequence belongs to the TRAFAC class dynamin-like GTPase superfamily. GB1/RHD3 GTPase family. RHD3 subfamily.

Its subcellular location is the endoplasmic reticulum membrane. Functionally, cooperates with the reticulon proteins and tubule-shaping DP1 family proteins to generate and maintain the structure of the tubular endoplasmic reticulum network. Has GTPase activity, which is required for its function in ER organization. This chain is Protein sey1 (sey1), found in Pyrenophora tritici-repentis (strain Pt-1C-BFP) (Wheat tan spot fungus).